The following is a 353-amino-acid chain: MLEMLMQWYRRRFSDPEAIALLVILVAGFGIIFFFSGLLAPLLVAIVLAYLLEWPTVRLQSIGCSRRWATSIVLVVFVGILLLMAFVVLPIAWQQGIYLIRDMPGMLNKLSDFAATLPRRYPALMDAGIIDAMAENMRSRMLTMGDSVVKISLASLVGLLTIAVYLVLVPLMVFFLLKDKEQMLNAVRRVLPRNRGLAGQVWKEMNQQITNYIRGKVLEMIVVGIATWLGFLLFGLNYSLLLAVLVGFSVLIPYIGAFVVTIPVVGVALFQFGAGTEFWSCFAVYLIIQALDGNLLVPVLFSEAVNLHPLVIILSVVIFGGLWGFWGVFFAIPLATLIKAVIHAWPDGQIAQE.

7 helical membrane-spanning segments follow: residues 19 to 39, 72 to 92, 156 to 176, 217 to 237, 240 to 260, 281 to 301, and 310 to 330; these read IALLVILVAGFGIIFFFSGLL, IVLVVFVGILLLMAFVVLPIA, LVGLLTIAVYLVLVPLMVFFL, VLEMIVVGIATWLGFLLFGLN, LLLAVLVGFSVLIPYIGAFVV, CFAVYLIIQALDGNLLVPVLF, and LVIILSVVIFGGLWGFWGVFF.

This sequence belongs to the autoinducer-2 exporter (AI-2E) (TC 2.A.86) family.

The protein resides in the cell membrane. The chain is Putative permease PerM (perM) from Escherichia coli O157:H7.